The sequence spans 416 residues: Gamma-glutamyl phosphate reductase (416 aa).

It belongs to the gamma-glutamyl phosphate reductase family.

It localises to the cytoplasm. It carries out the reaction L-glutamate 5-semialdehyde + phosphate + NADP(+) = L-glutamyl 5-phosphate + NADPH + H(+). The protein operates within amino-acid biosynthesis; L-proline biosynthesis; L-glutamate 5-semialdehyde from L-glutamate: step 2/2. Catalyzes the NADPH-dependent reduction of L-glutamate 5-phosphate into L-glutamate 5-semialdehyde and phosphate. The product spontaneously undergoes cyclization to form 1-pyrroline-5-carboxylate. The sequence is that of Gamma-glutamyl phosphate reductase from Streptococcus pyogenes serotype M49 (strain NZ131).